The sequence spans 152 residues: Small ribosomal subunit protein uS13 (152 aa).

Belongs to the universal ribosomal protein uS13 family. As to quaternary structure, component of the small ribosomal subunit.

It is found in the cytoplasm. In terms of biological role, component of the small ribosomal subunit. The ribosome is a large ribonucleoprotein complex responsible for the synthesis of proteins in the cell. Plays an essential role in early embryonic development. This Danio rerio (Zebrafish) protein is Small ribosomal subunit protein uS13 (rps18).